A 155-amino-acid chain; its full sequence is Small ribosomal subunit protein uS7cz/uS7cy (155 aa).

It belongs to the universal ribosomal protein uS7 family. As to quaternary structure, part of the 30S ribosomal subunit.

The protein localises to the plastid. It is found in the chloroplast. In terms of biological role, one of the primary rRNA binding proteins, it binds directly to 16S rRNA where it nucleates assembly of the head domain of the 30S subunit. This chain is Small ribosomal subunit protein uS7cz/uS7cy (rps7-A), found in Populus trichocarpa (Western balsam poplar).